The sequence spans 465 residues: Mothers against decapentaplegic homolog 1 (465 aa).

Met1 carries the post-translational modification N-acetylmethionine. The MH1 domain occupies 12-136 (PAVKRLLGWK…YKRVESPVLP (125 aa)). The Zn(2+) site is built by Cys64, Cys109, Cys121, and His126. Positions 162 to 249 (NEPHMPLNAT…QPMDTNMMAP (88 aa)) are disordered. The span at 179 to 210 (PNSHPFPHSPNSSYPNSPGSSSSTYPHSPTSS) shows a compositional bias: low complexity. The span at 221–232 (DTPPPAYLPPED) shows a compositional bias: pro residues. The MH2 domain maps to 271–465 (WCSIVYYELN…SPHNPISSVS (195 aa)). Thr322 is modified (phosphothreonine; by MINK1, TNIK and MAP4K4). Positions 418-428 (KGWGAEYHRQD) are L3 loop. 2 positions are modified to phosphoserine: Ser463 and Ser465.

The protein belongs to the dwarfin/SMAD family. As to quaternary structure, found in a complex with SMAD4 and YY1. Interacts with HGS, NANOG and ZCCHC12. Upon C-terminus phosphorylation: forms trimers with another SMAD1 and the co-SMAD SMAD4. Interacts with PEBP2-alpha subunit, CREB-binding protein (CBP), p300, SMURF1, SMURF2, USP15 and HOXC8. Associates with ZNF423 or ZNF521 in response to BMP2 leading to activate transcription of BMP target genes. Interacts with SKOR1. Interacts (via MH2 domain) with LEMD3. Binding to LEMD3 results in at least a partial reduction of receptor-mediated phosphorylation. Forms a ternary complex with PSMB4 and OAZ1 before PSMB4 is incorporated into the 20S proteasome. Interacts (via MH2 domain) with FAM83G (via MH2 domain); in a SMAD4-independent manner. Interacts with ZC3H3. Interacts with TMEM119. Interacts (via MH1 and MH2 domains) with ZNF8. Interacts with RANBP3L; the interaction increases when SMAD1 is not phosphorylated and mediates SMAD1 nuclear export. Interacts with EGR1; this interaction inhibits SMAD1 dephosphorylation. Interacts with SMAD6. Interacts with YAP1. Interacts with MTMR4; negatively regulates BMP signaling through SMAD1 dephosphorylation and retention in endosomes. Phosphorylation of the C-terminal SVS motif by BMP type 1 receptor kinase activates SMAD1 by promoting dissociation from the receptor and trimerization with SMAD4. Phosphorylation by ERK2 MAP kinase in response to EGF or HGF prevents SMAD1 nuclear accumulation and transcriptional activity in response to BMP. Dephosphorylation, probably by PPM1A, induces its export from the nucleus to the cytoplasm. Dephosphorylation is inhibited by association with EGR1. Phosphorylation by CDK8/9 creates binding sites for YAP1, and subsequent phosphorylation by GSK3 switches off YAP1 binding and adds binding sites for SMURF1. In terms of processing, ubiquitinated by SMAD-specific E3 ubiquitin ligase SMURF1, leading to its degradation. Monoubiquitinated, leading to prevent DNA-binding. Deubiquitination by USP15 alleviates inhibition and promotes activation of TGF-beta target genes. Dephosphorylation, probably by PPM1A, induces its export from the nucleus to the cytoplasm. Phospho-SMAD1 is ubiquitinated by CHIP leading to disruption of the SMAD1-SMAD4 complex.

The protein localises to the cytoplasm. Its subcellular location is the nucleus. In terms of biological role, transcriptional modulator that plays a role in various cellular processes, including embryonic development, cell differentiation, and tissue homeostasis. Upon BMP ligand binding to their receptors at the cell surface, is phosphorylated by activated type I BMP receptors (BMPRIs) and associates with SMAD4 to form an heteromeric complex which translocates into the nucleus acting as transcription factor. In turn, the hetero-trimeric complex recognizes cis-regulatory elements containing Smad Binding Elements (SBEs) to modulate the outcome of the signaling network. SMAD1/OAZ1/PSMB4 complex mediates the degradation of the CREBBP/EP300 repressor SNIP1. Positively regulates BMP4-induced expression of odontogenic development regulator MSX1 following IPO7-mediated nuclear import. The sequence is that of Mothers against decapentaplegic homolog 1 (SMAD1) from Bos taurus (Bovine).